Reading from the N-terminus, the 649-residue chain is 1,4-alpha-glucan branching enzyme GlgB (649 aa).

D315 acts as the Nucleophile in catalysis. E366 functions as the Proton donor in the catalytic mechanism.

Belongs to the glycosyl hydrolase 13 family. GlgB subfamily. In terms of assembly, monomer.

It catalyses the reaction Transfers a segment of a (1-&gt;4)-alpha-D-glucan chain to a primary hydroxy group in a similar glucan chain.. Its pathway is glycan biosynthesis; glycogen biosynthesis. In terms of biological role, catalyzes the formation of the alpha-1,6-glucosidic linkages in glycogen by scission of a 1,4-alpha-linked oligosaccharide from growing alpha-1,4-glucan chains and the subsequent attachment of the oligosaccharide to the alpha-1,6 position. This chain is 1,4-alpha-glucan branching enzyme GlgB, found in Ligilactobacillus salivarius (strain UCC118) (Lactobacillus salivarius).